The following is a 44-amino-acid chain: Cytochrome b559 subunit beta (44 aa).

A helical transmembrane segment spans residues 17-41 (VRWLAVHTLAVPSVFFVGAIAAMQF). Positions 18 and 23 each coordinate heme.

Belongs to the PsbE/PsbF family. In terms of assembly, heterodimer of an alpha subunit and a beta subunit. PSII is composed of 1 copy each of membrane proteins PsbA, PsbB, PsbC, PsbD, PsbE, PsbF, PsbH, PsbI, PsbJ, PsbK, PsbL, PsbM, PsbT, PsbX, PsbY, PsbZ, Psb30/Ycf12, peripheral proteins PsbO, CyanoQ (PsbQ), PsbU, PsbV and a large number of cofactors. It forms dimeric complexes. Heme b serves as cofactor.

Its subcellular location is the cellular thylakoid membrane. Functionally, this b-type cytochrome is tightly associated with the reaction center of photosystem II (PSII). PSII is a light-driven water:plastoquinone oxidoreductase that uses light energy to abstract electrons from H(2)O, generating O(2) and a proton gradient subsequently used for ATP formation. It consists of a core antenna complex that captures photons, and an electron transfer chain that converts photonic excitation into a charge separation. The polypeptide is Cytochrome b559 subunit beta (Synechocystis sp. (strain ATCC 27184 / PCC 6803 / Kazusa)).